A 424-amino-acid polypeptide reads, in one-letter code: Probable threonylcarbamoyladenosine tRNA methylthiotransferase (424 aa).

Positions 4 to 115 constitute an MTTase N-terminal domain; sequence IRVYIETFGC…APQAVRAASN (112 aa). Residues cysteine 13, cysteine 48, cysteine 79, cysteine 150, cysteine 154, and cysteine 157 each contribute to the [4Fe-4S] cluster site. The region spanning 136 to 365 is the Radical SAM core domain; the sequence is RSNPLIHIIP…EELKMRITEE (230 aa). A TRAM domain is found at 368–424; it reads RRLVGSFQEILVVERGRKGGFIGRTGSYIPVVTETGEPGSFRRVRIRDATGTYLLAD.

Belongs to the methylthiotransferase family. CDKAL1 subfamily. It depends on [4Fe-4S] cluster as a cofactor.

It catalyses the reaction N(6)-L-threonylcarbamoyladenosine(37) in tRNA + (sulfur carrier)-SH + AH2 + 2 S-adenosyl-L-methionine = 2-methylsulfanyl-N(6)-L-threonylcarbamoyladenosine(37) in tRNA + (sulfur carrier)-H + 5'-deoxyadenosine + L-methionine + A + S-adenosyl-L-homocysteine + 2 H(+). Functionally, catalyzes the methylthiolation of N6-threonylcarbamoyladenosine (t(6)A), leading to the formation of 2-methylthio-N6-threonylcarbamoyladenosine (ms(2)t(6)A) at position 37 in tRNAs that read codons beginning with adenine. In Methanothermobacter thermautotrophicus (strain ATCC 29096 / DSM 1053 / JCM 10044 / NBRC 100330 / Delta H) (Methanobacterium thermoautotrophicum), this protein is Probable threonylcarbamoyladenosine tRNA methylthiotransferase.